The sequence spans 396 residues: 1-deoxy-D-xylulose 5-phosphate reductoisomerase (396 aa).

NADPH contacts are provided by T13, G14, S15, I16, and N127. 1-deoxy-D-xylulose 5-phosphate is bound at residue K128. E129 serves as a coordination point for NADPH. Mn(2+) is bound at residue D153. Residues S154, E155, S184, and H207 each coordinate 1-deoxy-D-xylulose 5-phosphate. E155 contributes to the Mn(2+) binding site. G213 provides a ligand contact to NADPH. 1-deoxy-D-xylulose 5-phosphate-binding residues include S220, N225, K226, and E229. E229 lines the Mn(2+) pocket.

This sequence belongs to the DXR family. Requires Mg(2+) as cofactor. Mn(2+) is required as a cofactor.

The enzyme catalyses 2-C-methyl-D-erythritol 4-phosphate + NADP(+) = 1-deoxy-D-xylulose 5-phosphate + NADPH + H(+). It functions in the pathway isoprenoid biosynthesis; isopentenyl diphosphate biosynthesis via DXP pathway; isopentenyl diphosphate from 1-deoxy-D-xylulose 5-phosphate: step 1/6. Functionally, catalyzes the NADPH-dependent rearrangement and reduction of 1-deoxy-D-xylulose-5-phosphate (DXP) to 2-C-methyl-D-erythritol 4-phosphate (MEP). This Pseudomonas fluorescens (strain ATCC BAA-477 / NRRL B-23932 / Pf-5) protein is 1-deoxy-D-xylulose 5-phosphate reductoisomerase.